The sequence spans 73 residues: UPF0352 protein HSM_0097 (73 aa).

It belongs to the UPF0352 family.

The polypeptide is UPF0352 protein HSM_0097 (Histophilus somni (strain 2336) (Haemophilus somnus)).